A 274-amino-acid chain; its full sequence is Nitrogenase iron protein (274 aa).

8–15 serves as a coordination point for ATP; sequence GKGGIGKS. Cysteine 94 provides a ligand contact to [4Fe-4S] cluster. Arginine 97 carries the ADP-ribosylarginine; by dinitrogenase reductase ADP-ribosyltransferase modification. Position 131 (cysteine 131) interacts with [4Fe-4S] cluster.

Belongs to the NifH/BchL/ChlL family. As to quaternary structure, homodimer. It depends on [4Fe-4S] cluster as a cofactor. The reversible ADP-ribosylation of Arg-97 inactivates the nitrogenase reductase and regulates nitrogenase activity.

The enzyme catalyses N2 + 8 reduced [2Fe-2S]-[ferredoxin] + 16 ATP + 16 H2O = H2 + 8 oxidized [2Fe-2S]-[ferredoxin] + 2 NH4(+) + 16 ADP + 16 phosphate + 6 H(+). The key enzymatic reactions in nitrogen fixation are catalyzed by the nitrogenase complex, which has 2 components: the iron protein and the molybdenum-iron protein. This Chlorobium luteolum (strain DSM 273 / BCRC 81028 / 2530) (Pelodictyon luteolum) protein is Nitrogenase iron protein.